The following is a 1074-amino-acid chain: ADAMTS-like protein 4 (1074 aa).

The signal sequence occupies residues methionine 1–aspartate 24. The TSP type-1 1 domain maps to glycine 48–glutamate 93. Positions glutamine 77–leucine 342 are disordered. Residues arginine 103 to arginine 119 show a composition bias toward polar residues. Over residues leucine 132–isoleucine 152 the composition is skewed to basic and acidic residues. The span at alanine 206–proline 226 shows a compositional bias: polar residues. Positions glycine 310–proline 323 are enriched in gly residues. N-linked (GlcNAc...) (complex) asparagine glycosylation occurs at asparagine 490. TSP type-1 domains are found at residues cysteine 723–leucine 782, cysteine 783–threonine 842, tryptophan 845–glutamate 909, arginine 910–alanine 969, and cysteine 970–serine 1026. A glycan (N-linked (GlcNAc...) asparagine) is linked at asparagine 773. Positions proline 1029–leucine 1066 constitute a PLAC domain.

In terms of assembly, interacts with CTSB. Interacts with FBN1. In terms of processing, N-glycosylated. Can be O-fucosylated by POFUT2 on a serine or a threonine residue found within the consensus sequence C1-X(2)-(S/T)-C2-G of the TSP type-1 repeat domains where C1 and C2 are the first and second cysteine residue of the repeat, respectively. Fucosylated repeats can then be further glycosylated by the addition of a beta-1,3-glucose residue by the glucosyltransferase, B3GALTL. Fucosylation mediates the efficient secretion of ADAMTS family members. Can also be C-glycosylated with one or two mannose molecules on tryptophan residues within the consensus sequence W-X-X-W of the TPRs. N- and C-glycosylations can also facilitate secretion. In terms of tissue distribution, expressed in colon, heart, leukocyte, liver, lung, skeletal muscle, spleen, testis and placenta. Weaker expression in bone marrow, brain tissue, kidney and pancreas. Expression studies in fetal tissues reveal strong expression in heart, kidney, liver, lung and skeletal muscle, but weaker expression in fetal brain and skin.

The protein localises to the secreted. The protein resides in the extracellular space. Its subcellular location is the extracellular matrix. Its function is as follows. Positive regulation of apoptosis. May facilitate FBN1 microfibril biogenesis. This Homo sapiens (Human) protein is ADAMTS-like protein 4 (ADAMTSL4).